The chain runs to 298 residues: Proline-rich protein 32 (298 aa).

The tract at residues Cys-36 to Arg-56 is disordered.

The polypeptide is Proline-rich protein 32 (PRR32) (Homo sapiens (Human)).